A 2564-amino-acid polypeptide reads, in one-letter code: Histone-lysine N-methyltransferase SETD2 (2564 aa).

A compositionally biased stretch (pro residues) spans 1 to 11 (MKQLQPQPPPK). The segment at 1–30 (MKQLQPQPPPKMGDFYDPEHPTPEEEENEA) is disordered. Basic and acidic residues predominate over residues 17-30 (DPEHPTPEEEENEA). Residue serine 131 is modified to Phosphoserine. 3 disordered regions span residues 180 to 211 (STTVDSPPSSPPPPPPPAQATTLSSPAPVTEP), 272 to 561 (NEQA…TLSK), and 607 to 626 (PEREKAGSPAPSNRLNDSPT). A compositionally biased stretch (pro residues) spans 187–197 (PSSPPPPPPPA). Residues 198–207 (QATTLSSPAP) are compositionally biased toward low complexity. The segment covering 278-290 (SSKKEDSHIGKDE) has biased composition (basic and acidic residues). Serine 321, serine 323, and serine 344 each carry phosphoserine. Basic and acidic residues-rich tracts occupy residues 335–400 (RSHD…ERER), 421–432 (RSERSHYYDSDR), 439–467 (PYRERTRYSRPYTDNRARESSDSEEEYKK), and 479–528 (SYRD…EAIK). Lysine 359 is covalently cross-linked (Glycyl lysine isopeptide (Lys-Gly) (interchain with G-Cter in SUMO2)). Serine 422 is subject to Phosphoserine. Phosphoserine is present on residues serine 532, serine 614, and serine 624. The segment covering 616–625 (APSNRLNDSP) has biased composition (polar residues). Position 626 is a phosphothreonine (threonine 626). Lysine 637 is covalently cross-linked (Glycyl lysine isopeptide (Lys-Gly) (interchain with G-Cter in SUMO2)). Phosphoserine occurs at positions 698, 708, 744, and 754. Residue lysine 776 forms a Glycyl lysine isopeptide (Lys-Gly) (interchain with G-Cter in SUMO2) linkage. 5 disordered regions span residues 964–995 (EEGNSILPERRGRPEISLDERGEGGHVHTSDD), 1036–1101 (EDYS…SDHW), 1133–1233 (LHKG…LGKT), 1264–1352 (QEKP…FSDQ), and 1393–1443 (LEKN…PGSA). Positions 971–994 (PERRGRPEISLDERGEGGHVHTSD) are enriched in basic and acidic residues. The span at 1045 to 1058 (SNDESDSEDTDSDD) shows a compositional bias: acidic residues. Residues 1084–1095 (SPCSSRSSQSYR) are compositionally biased toward low complexity. At serine 1098 the chain carries Phosphoserine. Positions 1162 to 1171 (HPQSDGVDST) are enriched in polar residues. A compositionally biased stretch (basic and acidic residues) spans 1172–1191 (SHTDVKSDPLGHPNSEETVK). Over residues 1215 to 1225 (KSWQQTTFQNR) the composition is skewed to polar residues. Serine 1228 is modified (phosphoserine). Residues 1265-1276 (EKPSTTYQQPDS) show a composition bias toward polar residues. The segment covering 1393–1403 (LEKNDIKDRGP) has biased composition (basic and acidic residues). A phosphoserine mark is found at serine 1413, serine 1415, and serine 1417. The segment at 1418 to 1714 (DGELQDRKKV…KKERSRKKDS (297 aa)) is interaction with TUBA1A. Positions 1421 to 1431 (LQDRKKVRVEV) are enriched in basic and acidic residues. Residues 1494 to 1548 (IKRMQCECTPLSKDERAQGEIACGEDCLNRLLMIECSSRCPNGDYCSNRRFQRKQ) form the AWS domain. Zn(2+) is bound by residues cysteine 1499, cysteine 1501, cysteine 1516, cysteine 1520, cysteine 1529, cysteine 1533, and cysteine 1539. The SET domain occupies 1550–1667 (ADVEVILTEK…SGSELTFDYQ (118 aa)). S-adenosyl-L-methionine contacts are provided by residues 1560–1562 (KGW), 1603–1605 (HYY), and 1628–1629 (NH). Cysteine 1631 contributes to the Zn(2+) binding site. Residues 1674–1690 (EAQKCFCGSANCRGYLG) form the Post-SET domain. An S-adenosyl-L-methionine-binding site is contributed by glutamine 1676. Cysteine 1678 is a Zn(2+) binding site. Phenylalanine 1679 lines the S-adenosyl-L-methionine pocket. Zn(2+)-binding residues include cysteine 1680 and cysteine 1685. Phosphoserine is present on residues serine 1696, serine 1844, and serine 1845. Residues 1831 to 1872 (KTAVPPLSEGDGYSSENTSRAHTPLNTPDPSTKLSTEADTDT) are disordered. Positions 1844–1867 (SSENTSRAHTPLNTPDPSTKLSTE) are enriched in polar residues. 2 positions are modified to phosphothreonine: threonine 1853 and threonine 1872. Serine 1888 carries the phosphoserine modification. Residues 1921–2142 (EELQSQQLLP…EAQKQQQQMQ (222 aa)) form a disordered region. Low complexity predominate over residues 1924–1935 (QSQQLLPQQLPE). Serine 1952 carries the post-translational modification Phosphoserine. Over residues 1960-1972 (IEPKESNGTKLEE) the composition is skewed to basic and acidic residues. A compositionally biased stretch (acidic residues) spans 1973–1990 (PINEETPSQDEEEGVSDV). 3 positions are modified to phosphoserine: serine 1980, serine 1988, and serine 1995. Composition is skewed to basic and acidic residues over residues 1991-2004 (ESERSQEQPDKTVD), 2014-2046 (DSWKDLKEVYRIPKKSQTEKENTTTERGRDAVG), and 2059-2072 (RSRERDPDKQTQNK). Phosphoserine is present on residues serine 2080 and serine 2082. Composition is skewed to basic and acidic residues over residues 2090–2100 (RGTKRPDDRYD) and 2111–2135 (KDRNKLSTEERRKLFEQEVAQREAQ). Residues 2117 to 2146 (STEERRKLFEQEVAQREAQKQQQQMQNLGM) are a coiled coil. Residues 2137–2366 (QQQQMQNLGM…APGQPQPLQP (230 aa)) form a low charge region region. One can recognise a WW domain in the interval 2389 to 2422 (IVLPPNWKTARDPEGKIYYYHVITRQTQWDPPTW). The tract at residues 2439–2465 (LGTPTYDENPMKASKKPKTAEADTSSE) is disordered. Positions 2457-2564 (TAEADTSSEL…YKPKEDTELE (108 aa)) are interaction with POLR2A.

Belongs to the class V-like SAM-binding methyltransferase superfamily. Histone-lysine methyltransferase family. SET2 subfamily. In terms of assembly, specifically interacts with hyperphosphorylated C-terminal domain (CTD) of RNA polymerase II large subunit (POLR2A): binds to CTD heptad repeats doubly phosphorylated on 'Ser-2' and 'Ser-5' of each heptad. Interacts with HTT. Interacts with IWS1. Interacts with p53/TP53; leading to regulate p53/TP53 target genes. Component of a complex with HNRNPL. Interacts with TUBA1A; the interaction is independent on alpha-tubulin acetylation on 'Lys-40'. Interacts with STAT1. Post-translationally, may be automethylated. In terms of tissue distribution, ubiquitously expressed.

The protein resides in the nucleus. Its subcellular location is the chromosome. It carries out the reaction L-lysyl(36)-[histone H3] + 3 S-adenosyl-L-methionine = N(6),N(6),N(6)-trimethyl-L-lysyl(36)-[histone H3] + 3 S-adenosyl-L-homocysteine + 3 H(+). The enzyme catalyses L-lysyl-[protein] + S-adenosyl-L-methionine = N(6)-methyl-L-lysyl-[protein] + S-adenosyl-L-homocysteine + H(+). The catalysed reaction is L-lysyl-[protein] + 3 S-adenosyl-L-methionine = N(6),N(6),N(6)-trimethyl-L-lysyl-[protein] + 3 S-adenosyl-L-homocysteine + 3 H(+). Its activity is regulated as follows. Specifically inhibited by sinefungin derivatives. N-propyl sinefungin (Pr-SNF) interacts preferentially with SETD2. Its function is as follows. Histone methyltransferase that specifically trimethylates 'Lys-36' of histone H3 (H3K36me3) using dimethylated 'Lys-36' (H3K36me2) as substrate. It is capable of trimethylating unmethylated H3K36 (H3K36me0) in vitro. Represents the main enzyme generating H3K36me3, a specific tag for epigenetic transcriptional activation. Plays a role in chromatin structure modulation during elongation by coordinating recruitment of the FACT complex and by interacting with hyperphosphorylated POLR2A. Acts as a key regulator of DNA mismatch repair in G1 and early S phase by generating H3K36me3, a mark required to recruit MSH6 subunit of the MutS alpha complex: early recruitment of the MutS alpha complex to chromatin to be replicated allows a quick identification of mismatch DNA to initiate the mismatch repair reaction. Required for DNA double-strand break repair in response to DNA damage: acts by mediating formation of H3K36me3, promoting recruitment of RAD51 and DNA repair via homologous recombination (HR). Acts as a tumor suppressor. H3K36me3 also plays an essential role in the maintenance of a heterochromatic state, by recruiting DNA methyltransferase DNMT3A. H3K36me3 is also enhanced in intron-containing genes, suggesting that SETD2 recruitment is enhanced by splicing and that splicing is coupled to recruitment of elongating RNA polymerase. Required during angiogenesis. Required for endoderm development by promoting embryonic stem cell differentiation toward endoderm: acts by mediating formation of H3K36me3 in distal promoter regions of FGFR3, leading to regulate transcription initiation of FGFR3. In addition to histones, also mediates methylation of other proteins, such as tubulins and STAT1. Trimethylates 'Lys-40' of alpha-tubulins such as TUBA1B (alpha-TubK40me3); alpha-TubK40me3 is required for normal mitosis and cytokinesis and may be a specific tag in cytoskeletal remodeling. Involved in interferon-alpha-induced antiviral defense by mediating both monomethylation of STAT1 at 'Lys-525' and catalyzing H3K36me3 on promoters of some interferon-stimulated genes (ISGs) to activate gene transcription. Functionally, (Microbial infection) Recruited to the promoters of adenovirus 12 E1A gene in case of infection, possibly leading to regulate its expression. This is Histone-lysine N-methyltransferase SETD2 (SETD2) from Homo sapiens (Human).